A 219-amino-acid polypeptide reads, in one-letter code: Protein-L-isoaspartate O-methyltransferase 2 (219 aa).

The active site involves S67.

This sequence belongs to the methyltransferase superfamily. L-isoaspartyl/D-aspartyl protein methyltransferase family.

It localises to the cytoplasm. The enzyme catalyses [protein]-L-isoaspartate + S-adenosyl-L-methionine = [protein]-L-isoaspartate alpha-methyl ester + S-adenosyl-L-homocysteine. Functionally, catalyzes the methyl esterification of L-isoaspartyl residues in peptides and proteins that result from spontaneous decomposition of normal L-aspartyl and L-asparaginyl residues. It plays a role in the repair and/or degradation of damaged proteins. The protein is Protein-L-isoaspartate O-methyltransferase 2 of Nitrosococcus oceani (strain ATCC 19707 / BCRC 17464 / JCM 30415 / NCIMB 11848 / C-107).